Consider the following 116-residue polypeptide: Signal recognition particle 14 kDa protein (116 aa).

The protein belongs to the SRP14 family. As to quaternary structure, heterodimer with ZK512.4/SRP9; binds RNA as heterodimer. Component of a signal recognition particle (SRP) complex that consists of a 7SL RNA molecule of 300 nucleotides and six protein subunits: srpa-72, srpa-68, SRP54, F37F2.2/SRP19, F25G6.8/SRP14 and ZK512.4/SRP9.

It is found in the cytoplasm. Its function is as follows. Component of the signal recognition particle (SRP) complex, a ribonucleoprotein complex that mediates the cotranslational targeting of secretory and membrane proteins to the endoplasmic reticulum (ER). F37F2.2/srpa-19 together with F25G6.8/srpa-14 and the Alu portion of the SRP RNA, constitutes the elongation arrest domain of SRP. The complex of F37F2.2/srpa-19 and F25G6.8/srpa-14 is required for SRP RNA binding. The chain is Signal recognition particle 14 kDa protein from Caenorhabditis elegans.